A 472-amino-acid polypeptide reads, in one-letter code: Glycogen synthase (472 aa).

Lysine 16 provides a ligand contact to ADP-alpha-D-glucose.

Belongs to the glycosyltransferase 1 family. Bacterial/plant glycogen synthase subfamily.

The enzyme catalyses [(1-&gt;4)-alpha-D-glucosyl](n) + ADP-alpha-D-glucose = [(1-&gt;4)-alpha-D-glucosyl](n+1) + ADP + H(+). The protein operates within glycan biosynthesis; glycogen biosynthesis. Functionally, synthesizes alpha-1,4-glucan chains using ADP-glucose. The polypeptide is Glycogen synthase (Jannaschia sp. (strain CCS1)).